The sequence spans 235 residues: Lipoprotein-releasing system ATP-binding protein LolD (235 aa).

The region spanning 5 to 235 is the ABC transporter domain; it reads LECRDIRKVY…LMTESASVEG (231 aa). 41 to 48 is an ATP binding site; the sequence is GSSGSGKS.

Belongs to the ABC transporter superfamily. Lipoprotein translocase (TC 3.A.1.125) family. As to quaternary structure, the complex is composed of two ATP-binding proteins (LolD) and two transmembrane proteins (LolC and LolE).

It is found in the cell inner membrane. Its function is as follows. Part of the ABC transporter complex LolCDE involved in the translocation of mature outer membrane-directed lipoproteins, from the inner membrane to the periplasmic chaperone, LolA. Responsible for the formation of the LolA-lipoprotein complex in an ATP-dependent manner. The chain is Lipoprotein-releasing system ATP-binding protein LolD from Vibrio parahaemolyticus serotype O3:K6 (strain RIMD 2210633).